The following is a 660-amino-acid chain: DNA mismatch repair protein MutL (660 aa).

Belongs to the DNA mismatch repair MutL/HexB family.

In terms of biological role, this protein is involved in the repair of mismatches in DNA. It is required for dam-dependent methyl-directed DNA mismatch repair. May act as a 'molecular matchmaker', a protein that promotes the formation of a stable complex between two or more DNA-binding proteins in an ATP-dependent manner without itself being part of a final effector complex. The polypeptide is DNA mismatch repair protein MutL (Streptococcus equi subsp. zooepidemicus (strain H70)).